A 1174-amino-acid chain; its full sequence is Fanconi anemia group J protein homolog (1174 aa).

The Helicase ATP-binding domain occupies 11 to 445 (GGVKIHFPCR…KSHEPLRDVC (435 aa)). Residues 101-126 (NLDTSPHFNSPSKPSSGRNGVSTPCQ) show a composition bias toward polar residues. Disordered stretches follow at residues 101–160 (NLDT…EKKR) and 187–208 (LASEKRVKPESPIGKSFSDRKD). The segment covering 134-143 (LAAKLSAKKQ) has biased composition (low complexity). The short motif at 158-175 (KKRIRPLETTQQIRKRHC) is the Nuclear localization signal element. 185–192 (ARLASEKR) serves as a coordination point for ATP. Residues Cys-286, Cys-301, Cys-313, and Cys-353 each coordinate [4Fe-4S] cluster. Residues 393–396 (VILD) carry the DEAH box motif. The interaction with BRCA1 stretch occupies residues 888 to 1063 (SRRHQKVTNR…SNETADTSLG (176 aa)). 2 stretches are compositionally biased toward polar residues: residues 923-935 (TSVSESSHQSPEN) and 990-1001 (SRSSSPTFGKQT). Disordered stretches follow at residues 923-1001 (TSVS…GKQT) and 1102-1155 (LSPG…SSHS). Phosphoserine is present on residues Ser-929, Ser-932, and Ser-994. The segment covering 1138–1147 (DTNEENGELV) has biased composition (acidic residues). Lys-1174 is subject to N6-acetyllysine.

The protein belongs to the DEAD box helicase family. DEAH subfamily. As to quaternary structure, binds directly to the BRCT domains of BRCA1. Interacts with the CIA complex components CIAO1, CIAO2B and MMS19. [4Fe-4S] cluster serves as cofactor. In terms of processing, phosphorylated. Phosphorylation is necessary for interaction with BRCA1, and is cell-cycle regulated.

The protein resides in the nucleus. It localises to the cytoplasm. The catalysed reaction is Couples ATP hydrolysis with the unwinding of duplex DNA at the replication fork by translocating in the 5'-3' direction. This creates two antiparallel DNA single strands (ssDNA). The leading ssDNA polymer is the template for DNA polymerase III holoenzyme which synthesizes a continuous strand.. It catalyses the reaction ATP + H2O = ADP + phosphate + H(+). DNA-dependent helicase and 5' to 3' DNA helicase required for the maintenance of chromosomal stability. Acts late in the Fanconi anemia pathway, after FANCD2 ubiquitination. Involved in the repair of DNA double-strand breaks by homologous recombination in a manner that depends on its association with BRCA1. Involved in the repair of abasic sites at replication forks by promoting the degradation of DNA-protein cross-links: acts by catalyzing unfolding of HMCES DNA-protein cross-link via its helicase activity, exposing the underlying DNA and enabling cleavage of the DNA-protein adduct by the SPRTN metalloprotease. Can unwind RNA:DNA hybrids and G-quadruplex DNA. The protein is Fanconi anemia group J protein homolog of Mus musculus (Mouse).